Consider the following 57-residue polypeptide: Large ribosomal subunit protein bL32 (57 aa).

It belongs to the bacterial ribosomal protein bL32 family.

The polypeptide is Large ribosomal subunit protein bL32 (Streptomyces griseus subsp. griseus (strain JCM 4626 / CBS 651.72 / NBRC 13350 / KCC S-0626 / ISP 5235)).